Reading from the N-terminus, the 179-residue chain is Adenine phosphoribosyltransferase (179 aa).

Belongs to the purine/pyrimidine phosphoribosyltransferase family. As to quaternary structure, homodimer.

The protein resides in the cytoplasm. It carries out the reaction AMP + diphosphate = 5-phospho-alpha-D-ribose 1-diphosphate + adenine. It participates in purine metabolism; AMP biosynthesis via salvage pathway; AMP from adenine: step 1/1. Its function is as follows. Catalyzes a salvage reaction resulting in the formation of AMP, that is energically less costly than de novo synthesis. The protein is Adenine phosphoribosyltransferase of Methylacidiphilum infernorum (isolate V4) (Methylokorus infernorum (strain V4)).